The following is a 104-amino-acid chain: Large ribosomal subunit protein uL24 (104 aa).

This sequence belongs to the universal ribosomal protein uL24 family. Part of the 50S ribosomal subunit.

Its function is as follows. One of two assembly initiator proteins, it binds directly to the 5'-end of the 23S rRNA, where it nucleates assembly of the 50S subunit. One of the proteins that surrounds the polypeptide exit tunnel on the outside of the subunit. This chain is Large ribosomal subunit protein uL24, found in Halothermothrix orenii (strain H 168 / OCM 544 / DSM 9562).